A 481-amino-acid polypeptide reads, in one-letter code: Aromatic amino acid aminotransferase DDB_G0272014 (481 aa).

Residue K300 is modified to N6-(pyridoxal phosphate)lysine.

Belongs to the class-I pyridoxal-phosphate-dependent aminotransferase family. Requires pyridoxal 5'-phosphate as cofactor.

The protein resides in the cytoplasm. It carries out the reaction an aromatic L-alpha-amino acid + 2-oxoglutarate = an aromatic oxo-acid + L-glutamate. Has aromatic amino acid transaminase activity. The polypeptide is Aromatic amino acid aminotransferase DDB_G0272014 (Dictyostelium discoideum (Social amoeba)).